The sequence spans 428 residues: MENYSDQGGDGIELLDLLFDKNDGILRYENMGQQNNQLWPVQDPHMMMPPQGNEDFFNALIGGSDSVSGSPVWSPSPSDSGISEDPHSDHIDSPPPNASPPMEPHIVVSQTQHSLNINFPFDFNGWETGFLPDQAGGTQCASETPQAQPATGFPLTVKDLLLSGTPETAAKVSQQSYQELILTEDEKRLLAKEGMTLPNQFPLTKYEERILKKIRRKIRNKQSAQESRKKKKEYIDGLESRMAACSAHNHELQRKVFQLEKCNISLMEQLRRLQALVMNGSNKPVQAGTCVLVLLLSFTLILLPNLKPFTDTKVSQHGDFSPMRVQSRSLHNLQSSRVLRNLDHPYSMTENAKILPRFPEDKTMEEIASLLGRLHRRPQFTEYDPESHNHSFDQHDEHHHGDPITGHVATVTLNPRRGSRRSPHADDM.

Over 1–286 (MENYSDQGGD…VMNGSNKPVQ (286 aa)) the chain is Cytoplasmic. The span at 67–83 (VSGSPVWSPSPSDSGIS) shows a compositional bias: low complexity. Positions 67 to 104 (VSGSPVWSPSPSDSGISEDPHSDHIDSPPPNASPPMEP) are disordered. Residues 93–103 (SPPPNASPPME) are compositionally biased toward pro residues. One can recognise a bZIP domain in the interval 210 to 273 (ILKKIRRKIR…ISLMEQLRRL (64 aa)). The segment at 212-241 (KKIRRKIRNKQSAQESRKKKKEYIDGLESR) is basic motif. Residues 252 to 273 (LQRKVFQLEKCNISLMEQLRRL) form a leucine-zipper region. The chain crosses the membrane as a helical; Signal-anchor for type II membrane protein span at residues 287-303 (AGTCVLVLLLSFTLILL). At 304-428 (PNLKPFTDTK…SRRSPHADDM (125 aa)) the chain is on the lumenal side. Positions 381-428 (TEYDPESHNHSFDQHDEHHHGDPITGHVATVTLNPRRGSRRSPHADDM) are disordered. Positions 385–402 (PESHNHSFDQHDEHHHGD) are enriched in basic and acidic residues. Asparagine 389 carries an N-linked (GlcNAc...) asparagine glycan.

The protein belongs to the bZIP family. ATF subfamily. In terms of assembly, binds DNA as a dimer. Controlled by regulated intramembrane proteolysis (RIP). A fragment containing the cytoplasmic transcription factor domain is released by proteolysis. The cleavage seems to be performed sequentially by site-1 and site-2 proteases.

It is found in the endoplasmic reticulum membrane. The protein localises to the nucleus. In terms of biological role, transcriptional activator. Binds the cAMP response element (CRE). Activates transcription through box-B element and CRE. Seems to function synergistically with atf6. Regulates FGF21 transcription. This is Cyclic AMP-responsive element-binding protein 3-like protein 3-A (creb3l3a) from Danio rerio (Zebrafish).